The following is a 268-amino-acid chain: Formamidopyrimidine-DNA glycosylase (268 aa).

Residue Pro-2 is the Schiff-base intermediate with DNA of the active site. Catalysis depends on Glu-3, which acts as the Proton donor. Lys-56 acts as the Proton donor; for beta-elimination activity in catalysis. DNA-binding residues include His-91, Arg-110, and Arg-149. The FPG-type zinc finger occupies 234–268; the sequence is QVYGRFNQACPNCGQPLKRSRIGGRSSHYCEKCQQ. Arg-258 functions as the Proton donor; for delta-elimination activity in the catalytic mechanism.

It belongs to the FPG family. Monomer. Zn(2+) serves as cofactor.

It catalyses the reaction Hydrolysis of DNA containing ring-opened 7-methylguanine residues, releasing 2,6-diamino-4-hydroxy-5-(N-methyl)formamidopyrimidine.. The enzyme catalyses 2'-deoxyribonucleotide-(2'-deoxyribose 5'-phosphate)-2'-deoxyribonucleotide-DNA = a 3'-end 2'-deoxyribonucleotide-(2,3-dehydro-2,3-deoxyribose 5'-phosphate)-DNA + a 5'-end 5'-phospho-2'-deoxyribonucleoside-DNA + H(+). Involved in base excision repair of DNA damaged by oxidation or by mutagenic agents. Acts as a DNA glycosylase that recognizes and removes damaged bases. Has a preference for oxidized purines, such as 7,8-dihydro-8-oxoguanine (8-oxoG). Has AP (apurinic/apyrimidinic) lyase activity and introduces nicks in the DNA strand. Cleaves the DNA backbone by beta-delta elimination to generate a single-strand break at the site of the removed base with both 3'- and 5'-phosphates. The sequence is that of Formamidopyrimidine-DNA glycosylase from Syntrophomonas wolfei subsp. wolfei (strain DSM 2245B / Goettingen).